The sequence spans 260 residues: LKIAAFNIRTFGETKMSNATLSSYIVRILRRYDIALIEQVRDSHLVAVGKLLDDLNQDDPNSYHYVVSEPLGRNSYKERYLFVFRPNKVSVLDTYQYDDGCESCGNDSFSREPAVVKFSSPSTKVKAFAIVPLHSAPSDAVAEINSLYDVYLDVQQKWDLNDIMLMGDFNADCSYVTSSQWSSIRLRTSSTFQWLIPDSADTTATSTNCAYDRIVVAGSLLQSSVVGPSAVPFDFQAAYGLSNEMALAISDHYPVEVTLT.

Asn18 carries N-linked (GlcNAc...) asparagine glycosylation. Residue Glu78 is part of the active site. Cysteines 101 and 104 form a disulfide. His134 is a catalytic residue. The cysteines at positions 173 and 209 are disulfide-linked.

Belongs to the DNase I family. It depends on Ca(2+) as a cofactor. Mg(2+) is required as a cofactor.

The protein resides in the secreted. Its subcellular location is the zymogen granule. The protein localises to the nucleus envelope. It carries out the reaction Endonucleolytic cleavage to 5'-phosphodinucleotide and 5'-phosphooligonucleotide end-products.. Its function is as follows. Serum endocuclease secreted into body fluids by a wide variety of exocrine and endocrine organs. Expressed by non-hematopoietic tissues and preferentially cleaves protein-free DNA. Among other functions, seems to be involved in cell death by apoptosis. Binds specifically to G-actin and blocks actin polymerization. Together with DNASE1L3, plays a key role in degrading neutrophil extracellular traps (NETs). NETs are mainly composed of DNA fibers and are released by neutrophils to bind pathogens during inflammation. Degradation of intravascular NETs by DNASE1 and DNASE1L3 is required to prevent formation of clots that obstruct blood vessels and cause organ damage following inflammation. This is Deoxyribonuclease-1 (DNASE1) from Ovis aries (Sheep).